Reading from the N-terminus, the 477-residue chain is Ribulose bisphosphate carboxylase large chain (477 aa).

A propeptide spanning residues 1 to 2 (MS) is cleaved from the precursor. Position 3 is an N-acetylproline (P3). K14 bears the N6,N6,N6-trimethyllysine mark. N123 and T173 together coordinate substrate. The Proton acceptor role is filled by K175. K177 serves as a coordination point for substrate. K201, D203, and E204 together coordinate Mg(2+). An N6-carboxylysine modification is found at K201. Catalysis depends on H294, which acts as the Proton acceptor. Substrate-binding residues include R295, H327, and S379.

It belongs to the RuBisCO large chain family. Type I subfamily. As to quaternary structure, heterohexadecamer of 8 large chains and 8 small chains; disulfide-linked. The disulfide link is formed within the large subunit homodimers. Mg(2+) serves as cofactor. In terms of processing, the disulfide bond which can form in the large chain dimeric partners within the hexadecamer appears to be associated with oxidative stress and protein turnover.

It localises to the plastid. It is found in the chloroplast. It catalyses the reaction 2 (2R)-3-phosphoglycerate + 2 H(+) = D-ribulose 1,5-bisphosphate + CO2 + H2O. It carries out the reaction D-ribulose 1,5-bisphosphate + O2 = 2-phosphoglycolate + (2R)-3-phosphoglycerate + 2 H(+). RuBisCO catalyzes two reactions: the carboxylation of D-ribulose 1,5-bisphosphate, the primary event in carbon dioxide fixation, as well as the oxidative fragmentation of the pentose substrate in the photorespiration process. Both reactions occur simultaneously and in competition at the same active site. The sequence is that of Ribulose bisphosphate carboxylase large chain from Digitalis purpurea (Common foxglove).